Reading from the N-terminus, the 438-residue chain is Ribosomal protein uS12 methylthiotransferase RimO (438 aa).

The MTTase N-terminal domain occupies 1 to 115; it reads MKYFILSLGC…LDKLLADLGE (115 aa). 6 residues coordinate [4Fe-4S] cluster: cysteine 10, cysteine 46, cysteine 78, cysteine 150, cysteine 154, and cysteine 157. The Radical SAM core domain occupies 136 to 366; the sequence is KSNEVYRYIK…MEVQQEISLN (231 aa). Residues 369 to 437 enclose the TRAM domain; sequence KALVGKKIPV…IYDLKGEFIN (69 aa).

Belongs to the methylthiotransferase family. RimO subfamily. It depends on [4Fe-4S] cluster as a cofactor.

It is found in the cytoplasm. The enzyme catalyses L-aspartate(89)-[ribosomal protein uS12]-hydrogen + (sulfur carrier)-SH + AH2 + 2 S-adenosyl-L-methionine = 3-methylsulfanyl-L-aspartate(89)-[ribosomal protein uS12]-hydrogen + (sulfur carrier)-H + 5'-deoxyadenosine + L-methionine + A + S-adenosyl-L-homocysteine + 2 H(+). Functionally, catalyzes the methylthiolation of an aspartic acid residue of ribosomal protein uS12. The protein is Ribosomal protein uS12 methylthiotransferase RimO of Carboxydothermus hydrogenoformans (strain ATCC BAA-161 / DSM 6008 / Z-2901).